Consider the following 384-residue polypeptide: Chorismate synthase (384 aa).

Positions 40 and 46 each coordinate NADP(+). FMN is bound by residues 128–130, G292, 307–311, and R333; these read RAS and KPIPT.

It belongs to the chorismate synthase family. Homotetramer. Requires FMNH2 as cofactor.

The enzyme catalyses 5-O-(1-carboxyvinyl)-3-phosphoshikimate = chorismate + phosphate. Its pathway is metabolic intermediate biosynthesis; chorismate biosynthesis; chorismate from D-erythrose 4-phosphate and phosphoenolpyruvate: step 7/7. In terms of biological role, catalyzes the anti-1,4-elimination of the C-3 phosphate and the C-6 proR hydrogen from 5-enolpyruvylshikimate-3-phosphate (EPSP) to yield chorismate, which is the branch point compound that serves as the starting substrate for the three terminal pathways of aromatic amino acid biosynthesis. This reaction introduces a second double bond into the aromatic ring system. This is Chorismate synthase from Carboxydothermus hydrogenoformans (strain ATCC BAA-161 / DSM 6008 / Z-2901).